The following is a 1474-amino-acid chain: Alpha-2-macroglobulin-P (1474 aa).

The signal sequence occupies residues 1–32; sequence MGKRWLPSLALLPLPPPLLLLLLLLLPTNASA. A disulfide bridge connects residues Cys55 and Cys93. 3 N-linked (GlcNAc...) asparagine glycosylation sites follow: Asn62, Asn77, and Asn253. 2 disulfide bridges follow: Cys257–Cys305 and Cys275–Cys293. N-linked (GlcNAc...) asparagine glycosylation is present at Asn402. 3 disulfides stabilise this stretch: Cys476–Cys569, Cys601–Cys771, and Cys650–Cys697. The segment at 623 to 752 is bait region; the sequence is LVYDLLPVKD…LVIVDSTGVA (130 aa). N-linked (GlcNAc...) asparagine glycosylation is found at Asn654 and Asn774. Cystine bridges form between Cys821-Cys849, Cys847-Cys883, Cys921-Cys1321, Cys1079-Cys1127, and Cys1352-Cys1467. Asn869 carries N-linked (GlcNAc...) asparagine glycosylation. The segment at residues 972–975 is a cross-link (isoglutamyl cysteine thioester (Cys-Gln)); it reads CGEQ. Asn991 carries an N-linked (GlcNAc...) asparagine glycan. Residue Asn1366 is glycosylated (N-linked (GlcNAc...) asparagine).

Belongs to the protease inhibitor I39 (alpha-2-macroglobulin) family. Homotetramer; disulfide-linked. As to expression, expressed in uterus, mesometrial lymphoid aggregate and mammary tissue during pregnancy. Expressed in ovary, testis and kidney. Low level expression in heart. Not expressed in liver.

It is found in the secreted. Is able to inhibit all four classes of proteinases by a unique 'trapping' mechanism. This protein has a peptide stretch, called the 'bait region' which contains specific cleavage sites for different proteinases. When a proteinase cleaves the bait region, a conformational change is induced in the protein which traps the proteinase. The entrapped enzyme remains active against low molecular weight substrates (activity against high molecular weight substrates is greatly reduced). Following cleavage in the bait region a thioester bond is hydrolyzed and mediates the covalent binding of the protein to the proteinase. The chain is Alpha-2-macroglobulin-P from Mus musculus (Mouse).